A 306-amino-acid polypeptide reads, in one-letter code: BRCA2 and CDKN1A-interacting protein (306 aa).

The span at Met-1–Val-10 shows a compositional bias: basic residues. Residues Met-1 to Val-45 are disordered. Positions Gly-18 to Val-45 are enriched in acidic residues. Phosphoserine is present on residues Ser-34 and Ser-104. Residues Ile-51–Arg-159 are interaction with BRCA2. The segment at Met-153–Lys-251 is interaction with CDKN1A. Ser-273 is subject to Phosphoserine.

It belongs to the BCP1 family. In terms of assembly, interacts with BRCA2, CDKN1A and MTDH/LYRIC. Interacts with DCTN1/p150-glued and ACTR1A/ARP1. Interacts with alpha-, beta- and gamma-tubulins. Interacts with TENT5C; the interaction has no effect on TENT5C poly(A) polymerase function.

Its subcellular location is the nucleus. It localises to the cytoplasm. It is found in the cytoskeleton. The protein resides in the microtubule organizing center. The protein localises to the centrosome. Its subcellular location is the centriole. It localises to the spindle pole. Functionally, during interphase, required for microtubule organizing and anchoring activities. During mitosis, required for the organization and stabilization of the spindle pole. May promote cell cycle arrest by enhancing the inhibition of CDK2 activity by CDKN1A. May be required for repair of DNA damage by homologous recombination in conjunction with BRCA2. May not be involved in non-homologous end joining (NHEJ). This chain is BRCA2 and CDKN1A-interacting protein (BCCIP), found in Bos taurus (Bovine).